Reading from the N-terminus, the 298-residue chain is HTH-type transcriptional regulator TsaR (298 aa).

Residues 1 to 58 (MKLQTLQALICIEEVGSLRAAAQLLHLSQPALSAAIQQLEDELKAPLLVRTKRGVSLT) form the HTH lysR-type domain. A DNA-binding region (H-T-H motif) is located at residues 18–37 (LRAAAQLLHLSQPALSAAIQ). Residues Ser-98 and Ala-100 each coordinate toluene-4-sulfonate.

This sequence belongs to the LysR transcriptional regulatory family. In terms of assembly, homotetramer. Dimer of dimers related by a twofold axis.

Its activity is regulated as follows. Sensitive to oxygen. Functionally, regulates expression of the tsaMBCD1 operon and of tsaT in response to p-toluenesulfonate (TSA). Acts by binding directly to the promoter region. Binding to the tsa promoter depends on TSA concentration. The chain is HTH-type transcriptional regulator TsaR (tsaR) from Comamonas testosteroni (Pseudomonas testosteroni).